We begin with the raw amino-acid sequence, 461 residues long: MSLAEAKKLDKKFPTFKNEFAIPTFGSLGIKNNKYESSTESIYLCGNSLGLMPKNTKKAINDELNAWVERGVESHFNHPDKSLTPWVDIDLPLLPLIAPIVGAKENEVAVMGSLTANLNALLIHFYKPEGKRTKILFEKQAFPSDYYAFLNIVKLFGYDEKHLIQLEVQPGETYIKTERIIKAIDENSDELALVCFPGIQYYTGQFFKIEEITKYAKEKSQQIKVGWDLAHAVGNVPLNLHDWGVDFAAWCSYKYLNSGPGAIGGIFVHEKYTIENKKSSFVPRLAGWWGNNSQERFKMLEEFDPINSALSYRQSNPSVLDVVAVKSSLEVYAKVGGVSKLREKSVALTQFLQDLLTNSKYYIPQSSTSNSKFGFKILTPLNPAERGCQLSIMFQPHFDEKDKNVMERVNAYLHDHAIICDERRPDVIRLAPLPLYNTFEETFIAVQRLFEALDNISKEYM.

Residues Leu114, Thr115, 142–145 (FPSD), Asp228, His231, and Tyr253 contribute to the pyridoxal 5'-phosphate site. An N6-(pyridoxal phosphate)lysine modification is found at Lys254. Pyridoxal 5'-phosphate is bound by residues Trp288 and Asn316.

It belongs to the kynureninase family. As to quaternary structure, homodimer. Pyridoxal 5'-phosphate is required as a cofactor.

It localises to the cytoplasm. It catalyses the reaction L-kynurenine + H2O = anthranilate + L-alanine + H(+). The enzyme catalyses 3-hydroxy-L-kynurenine + H2O = 3-hydroxyanthranilate + L-alanine + H(+). It functions in the pathway amino-acid degradation; L-kynurenine degradation; L-alanine and anthranilate from L-kynurenine: step 1/1. Its pathway is cofactor biosynthesis; NAD(+) biosynthesis; quinolinate from L-kynurenine: step 2/3. Catalyzes the cleavage of L-kynurenine (L-Kyn) and L-3-hydroxykynurenine (L-3OHKyn) into anthranilic acid (AA) and 3-hydroxyanthranilic acid (3-OHAA), respectively. The chain is Kynureninase from Candida albicans (strain SC5314 / ATCC MYA-2876) (Yeast).